Reading from the N-terminus, the 803-residue chain is Dynein axonemal intermediate chain 4 (803 aa).

A compositionally biased stretch (polar residues) spans 1-33 (MPSSPTSTRKQTNFTASVSAQSRKSISFGNPKS). Disordered regions lie at residues 1–41 (MPSS…GYAG), 88–109 (LYHPDPHAMPTKPSKLLTSQEG), and 143–163 (STVSKSSISTTESMTEDLEDP). The segment covering 143–155 (STVSKSSISTTES) has biased composition (low complexity). WD repeat units follow at residues 492-532 (QSPY…NTPV), 541-589 (KHLG…DCHD), 616-656 (SRQA…QYLE), 660-700 (GHKG…PFFT), 703-742 (PTTYVVYDVAWSPKSAYIFAAANENRVEIWDLQISTLDPL), and 748-787 (NPGIKFTTVLFAKQTDCLLVGDSDGQVAVYELRNMPTPTE).

Part of the multisubunit axonemal dynein complex formed at least of two heavy chains and a number of intermediate and light chains. Associated with axonemal dynein subunits such as, DNAH2, DNAI3, and DYNLT1. Interacts with DYNLT1.

The protein localises to the cytoplasm. Its subcellular location is the cytoskeleton. It localises to the flagellum axoneme. It is found in the cilium axoneme. The protein resides in the dynein axonemal particle. Plays a critical role in the assembly of axonemal dynein complex, thereby playing a role in ciliary motility. The protein is Dynein axonemal intermediate chain 4 of Rattus norvegicus (Rat).